The sequence spans 353 residues: Photosystem II D2 protein (353 aa).

Residue Thr-2 is modified to N-acetylthreonine. Thr-2 bears the Phosphothreonine mark. Residues 41 to 61 traverse the membrane as a helical segment; sequence CAYFALGGWFTGTTFVTSWYT. His-118 provides a ligand contact to chlorophyll a. A helical membrane pass occupies residues 125-141; sequence GFMLRQFELARSVQLRP. Gln-130 and Asn-143 together coordinate pheophytin a. The helical transmembrane segment at 153–166 threads the bilayer; that stretch reads VFVSVFLIYPLGQS. Position 198 (His-198) interacts with chlorophyll a. Residues 208–228 form a helical membrane-spanning segment; sequence AALLCAIHGATVENTLFEDGD. A plastoquinone contacts are provided by His-215 and Phe-262. His-215 lines the Fe cation pocket. His-269 is a Fe cation binding site. The helical transmembrane segment at 279 to 295 threads the bilayer; sequence GLWMSALGVVGLALNLR.

It belongs to the reaction center PufL/M/PsbA/D family. In terms of assembly, PSII is composed of 1 copy each of membrane proteins PsbA, PsbB, PsbC, PsbD, PsbE, PsbF, PsbH, PsbI, PsbJ, PsbK, PsbL, PsbM, PsbT, PsbX, PsbY, PsbZ, Psb30/Ycf12, at least 3 peripheral proteins of the oxygen-evolving complex and a large number of cofactors. It forms dimeric complexes. The D1/D2 heterodimer binds P680, chlorophylls that are the primary electron donor of PSII, and subsequent electron acceptors. It shares a non-heme iron and each subunit binds pheophytin, quinone, additional chlorophylls, carotenoids and lipids. There is also a Cl(-1) ion associated with D1 and D2, which is required for oxygen evolution. The PSII complex binds additional chlorophylls, carotenoids and specific lipids. is required as a cofactor.

It localises to the plastid. It is found in the chloroplast thylakoid membrane. The enzyme catalyses 2 a plastoquinone + 4 hnu + 2 H2O = 2 a plastoquinol + O2. In terms of biological role, photosystem II (PSII) is a light-driven water:plastoquinone oxidoreductase that uses light energy to abstract electrons from H(2)O, generating O(2) and a proton gradient subsequently used for ATP formation. It consists of a core antenna complex that captures photons, and an electron transfer chain that converts photonic excitation into a charge separation. The D1/D2 (PsbA/PsbD) reaction center heterodimer binds P680, the primary electron donor of PSII as well as several subsequent electron acceptors. D2 is needed for assembly of a stable PSII complex. This Olimarabidopsis pumila (Dwarf rocket) protein is Photosystem II D2 protein.